Reading from the N-terminus, the 86-residue chain is Large ribosomal subunit protein uL23 (86 aa).

The protein belongs to the universal ribosomal protein uL23 family. Part of the 50S ribosomal subunit. Contacts protein L29.

In terms of biological role, binds to 23S rRNA. One of the proteins that surrounds the polypeptide exit tunnel on the outside of the ribosome. This Thermococcus onnurineus (strain NA1) protein is Large ribosomal subunit protein uL23.